The following is a 1495-amino-acid chain: ESX secretion system protein YukB (1495 aa).

Transmembrane regions (helical) follow at residues 246-266 (LWLV…VAII) and 270-290 (GIFI…STVQ). FtsK domains are found at residues 661-858 (KDDI…TDSK) and 993-1177 (QAPI…SEGY). Residues 682–689 (GTTGSGKS) and 1010–1017 (GSSGYGKS) contribute to the ATP site.

This sequence belongs to the EssC family.

It localises to the cell membrane. Functionally, required for YukE secretion. Probable component or regulator of the ESX/ESAT-6-like secretion system (BsEss). This Bacillus subtilis (strain 168) protein is ESX secretion system protein YukB (yukB).